A 239-amino-acid polypeptide reads, in one-letter code: Phosphothreonine lyase OspF (239 aa).

His104 acts as the Proton donor in catalysis. The active-site Proton acceptor is the Lys134.

The protein belongs to the phosphothreonine lyase family.

It localises to the secreted. Its function is as follows. Catalyzes the removal of the phosphate group from the phosphothreonine in the mitogen-activated protein kinases such as MAPK2/ERK2, MAPK3/ERK1, MAPK8 and MAPK14 in an irreversible reaction, thus preventing the downstream phosphorylation of histone H3. This epigenetic modification results in inhibition of the transcription of a specific subset of pro-inflammatory genes, and ultimately to a reduced immune response against the invading pathogen. The diminished immune response enhances the bacterium's ability to disseminate and multiply within the host. The polypeptide is Phosphothreonine lyase OspF (ospF) (Shigella sonnei (strain Ss046)).